The primary structure comprises 132 residues: Small ribosomal subunit protein uS8 (132 aa).

Belongs to the universal ribosomal protein uS8 family. Part of the 30S ribosomal subunit. Contacts proteins S5 and S12.

Its function is as follows. One of the primary rRNA binding proteins, it binds directly to 16S rRNA central domain where it helps coordinate assembly of the platform of the 30S subunit. This is Small ribosomal subunit protein uS8 from Rhodospirillum rubrum (strain ATCC 11170 / ATH 1.1.1 / DSM 467 / LMG 4362 / NCIMB 8255 / S1).